Reading from the N-terminus, the 134-residue chain is Profilin-2 (134 aa).

Cys13 and Cys118 are oxidised to a cystine. Positions 84 to 100 (AVIRGKKGSGGITIKKT) match the Involved in PIP2 interaction motif. Thr114 is modified (phosphothreonine).

It belongs to the profilin family. As to quaternary structure, occurs in many kinds of cells as a complex with monomeric actin in a 1:1 ratio. Post-translationally, phosphorylated by MAP kinases.

It localises to the cytoplasm. The protein resides in the cytoskeleton. Its function is as follows. Binds to actin and affects the structure of the cytoskeleton. At high concentrations, profilin prevents the polymerization of actin, whereas it enhances it at low concentrations. In Olea europaea (Common olive), this protein is Profilin-2.